Here is a 382-residue protein sequence, read N- to C-terminus: Cell division protein FtsZ (382 aa).

Residues 21-25 (GGGSN), 108-110 (GTG), glutamate 139, arginine 143, and aspartate 187 contribute to the GTP site. The interval 322–382 (RAQQQSNFNR…FLRNRRRKSR (61 aa)) is disordered. Residues 340 to 352 (KSKEKEAEKKEPR) are compositionally biased toward basic and acidic residues.

Belongs to the FtsZ family. Homodimer. Polymerizes to form a dynamic ring structure in a strictly GTP-dependent manner. Interacts directly with several other division proteins.

It localises to the cytoplasm. In terms of biological role, essential cell division protein that forms a contractile ring structure (Z ring) at the future cell division site. The regulation of the ring assembly controls the timing and the location of cell division. One of the functions of the FtsZ ring is to recruit other cell division proteins to the septum to produce a new cell wall between the dividing cells. Binds GTP and shows GTPase activity. The sequence is that of Cell division protein FtsZ from Halalkalibacterium halodurans (strain ATCC BAA-125 / DSM 18197 / FERM 7344 / JCM 9153 / C-125) (Bacillus halodurans).